A 1152-amino-acid polypeptide reads, in one-letter code: Alpha-mannosidase 2x (1152 aa).

The Cytoplasmic portion of the chain corresponds to 1 to 5 (MKLKK). A helical; Signal-anchor for type II membrane protein membrane pass occupies residues 6-26 (QVTVCGAAIFCVAVFSLYLML). At 27–796 (DRVQHDPARH…VDEEQEQQME (770 aa)) the chain is on the lumenal side. A coiled-coil region spans residues 43–74 (PRSQISVLQNRIEQLEQLLEENHDIISRIKDS). Residues His175 and Asp177 each coordinate Zn(2+). The N-linked (GlcNAc...) asparagine glycan is linked to Asn225. A Zn(2+)-binding site is contributed by Asp289. The active-site Nucleophile is the Asp289. An N-linked (GlcNAc...) asparagine glycan is attached at Asn305. His569 lines the Zn(2+) pocket.

The protein belongs to the glycosyl hydrolase 38 family. In terms of assembly, homodimer; disulfide-linked. Interacts with MGAT4D. Zn(2+) is required as a cofactor.

It is found in the golgi apparatus membrane. It catalyses the reaction N(4)-{beta-D-GlcNAc-(1-&gt;2)-alpha-D-Man-(1-&gt;3)-[alpha-D-Man-(1-&gt;3)-[alpha-D-Man-(1-&gt;6)]-alpha-D-Man-(1-&gt;6)]-beta-D-Man-(1-&gt;4)-beta-D-GlcNAc-(1-&gt;4)-beta-D-GlcNAc}-L-asparaginyl-[protein] + 2 H2O = 2 alpha-D-mannopyranose + an N(4)-{beta-D-GlcNAc-(1-&gt;2)-alpha-D-Man-(1-&gt;3)-[alpha-D-Man-(1-&gt;6)]-beta-D-Man-(1-&gt;4)-beta-D-GlcNAc-(1-&gt;4)-beta-D-GlcNAc}-L-asparaginyl-[protein]. The protein operates within protein modification; protein glycosylation. Catalyzes the first committed step in the biosynthesis of complex N-glycans. It controls conversion of high mannose to complex N-glycans; the final hydrolytic step in the N-glycan maturation pathway. The sequence is that of Alpha-mannosidase 2x (Man2a2) from Mus musculus (Mouse).